A 77-amino-acid chain; its full sequence is U18-lycotoxin-Ls1a (77 aa).

An N-terminal signal peptide occupies residues 1 to 22 (MSPKMQALLLLLGLITLLVVHA). A propeptide spanning residues 23–34 (EEELSENTESER) is cleaved from the precursor. Disulfide bonds link C36/C51, C43/C56, C50/C67, and C58/C65.

Belongs to the neurotoxin 02 (plectoxin) family. As to expression, expressed by the venom gland.

The protein resides in the secreted. This is U18-lycotoxin-Ls1a from Lycosa singoriensis (Wolf spider).